Here is a 466-residue protein sequence, read N- to C-terminus: Amino acid permease 4 (466 aa).

Over 1 to 22 (MDVPRPAFKCFDDDGRLKRSGT) the chain is Cytoplasmic. The next 2 helical transmembrane spans lie at 23 to 43 (VWTA…LSLA) and 44 to 64 (WAIG…FSFV). The Cytoplasmic segment spans residues 65-111 (TYYSSTLLSDCYRTGDPVSGKRNYTYMDAVRSILGGFRFKICGLIQY). The chain crosses the membrane as a helical span at residues 112-132 (LNLFGITVGYTIAASISMMAI). Residues 133-177 (KRSNCFHESGGKNPCHMSSNPYMIMFGVTEILLSQIKDFDQIWWL) are Extracellular-facing. A helical membrane pass occupies residues 178–198 (SIVAAIMSFTYSAIGLALGII). Topologically, residues 199-226 (QVAANGVVKGSLTGISIGAVTQTQKIWR) are cytoplasmic. Residues 227-247 (TFQALGDIAFAYSYSVVLIEI) traverse the membrane as a helical segment. Residues 248-266 (QDTVRSPPAESKTMKIATR) lie on the Extracellular side of the membrane. A helical membrane pass occupies residues 267–287 (ISIAVTTTFYMLCGCMGYAAF). The Cytoplasmic portion of the chain corresponds to 288–290 (GDK). The helical transmembrane segment at 291–311 (APGNLLTGFGFYNPFWLLDVA) threads the bilayer. At 312-313 (NA) the chain is on the extracellular side. The chain crosses the membrane as a helical span at residues 314–334 (AIVIHLVGAYQVFAQPIFAFI). Residues 335-369 (EKQAAARFPDSDLVTKEYEIRIPGFRSPYKVNVFR) are Cytoplasmic-facing. Residues 370 to 390 (AVYRSGFVVLTTVISMLMPFF) traverse the membrane as a helical segment. At 391–392 (ND) the chain is on the extracellular side. Residues 393-413 (VVGILGALGFWPLTVYFPVEM) form a helical membrane-spanning segment. The Cytoplasmic segment spans residues 414 to 435 (YIRQRKVERWSMKWVCLQMLSC). The chain crosses the membrane as a helical span at residues 436 to 456 (GCLMITLVAGVGSIAGVMLDL). The Extracellular portion of the chain corresponds to 457 to 466 (KVYKPFKTTY).

The protein belongs to the amino acid/polyamine transporter 2 family. Amino acid/auxin permease (AAAP) (TC 2.A.18.2) subfamily. As to expression, expressed in leaves, stems and flowers.

The protein resides in the cell membrane. With respect to regulation, inhibited by 2,4-dinitrophenol. Its function is as follows. Amino acid-proton symporter. Stereospecific transporter with a broad specificity for neutral amino acids, favoring small amino acids such as alanine, asparagine and glutamine. Also accepts large aromatic residues such as in phenlalanine or tyrosine. The polypeptide is Amino acid permease 4 (AAP4) (Arabidopsis thaliana (Mouse-ear cress)).